Consider the following 98-residue polypeptide: Protein Asterix (98 aa).

Helical transmembrane passes span L32–V52 and V78–V98.

It belongs to the Asterix family.

Its subcellular location is the membrane. In Dictyostelium discoideum (Social amoeba), this protein is Protein Asterix.